The following is a 387-amino-acid chain: MLVQGTIICALVANAIASSIPSSFLLPEPSGPFKVQREILELTDWSRKDINSTLPRRLMVSRFNPIPEKHCIRTEDVPTFPPASAKLEDAILQAASGGHWVDGLLAASRIRVCADVKKGYQTDSHGDNHGIPILLFSPGGNTTRLVYSSIAQTISSAGYTVITMDHPHDTDIVEFLNGDIITGGEVTFSNPSVLPFWNDVRVQDTVFVLNQALKTSPHARIGMLGHSFGGSAVLSSMVKDGRISAGINFDGGLWGDAVNTGLGGRKKPQPYLQWGAYTHNRHNDTSWETLWKAMERLHPHAWKKELGIPAGRHNTFSDFPAIIDAGGVREVIGKASIDVLVGDIPAARSLEFIKVYVHDFFQFSLFGKDEGLLRGPSSKYPEVVFLD.

Positions 1 to 17 (MLVQGTIICALVANAIA) are cleaved as a signal peptide. Asparagine 51 and asparagine 141 each carry an N-linked (GlcNAc...) asparagine glycan. Catalysis depends on serine 227, which acts as the Nucleophile. The active-site Charge relay system is aspartate 250. Asparagine 283 carries N-linked (GlcNAc...) asparagine glycosylation. Histidine 313 acts as the Charge relay system in catalysis.

It belongs to the AB hydrolase superfamily. Lipase family.

It localises to the secreted. It catalyses the reaction a 1-O-alkyl-2-acetyl-sn-glycero-3-phosphocholine + H2O = a 1-O-alkyl-sn-glycero-3-phosphocholine + acetate + H(+). The protein is Probable 1-alkyl-2-acetylglycerophosphocholine esterase of Arthroderma benhamiae (strain ATCC MYA-4681 / CBS 112371) (Trichophyton mentagrophytes).